The sequence spans 424 residues: Fasciclin-like arabinogalactan protein 1 (424 aa).

Residues 1–24 (MAKKMSSLIIIFNILLLLTTQTHA) form the signal peptide. 2 FAS1 domains span residues 25–170 (HNVT…SRVL) and 184–323 (EMNL…DKVL). Asparagine 26, asparagine 128, asparagine 160, asparagine 186, and asparagine 240 each carry an N-linked (GlcNAc...) asparagine glycan. The disordered stretch occupies residues 338–393 (APAPAPEDGDVADSPKAAKGKAKGKKKKAAPSPDNDPFGDSDSPAEGPDGEADDAT). Over residues 355–366 (AKGKAKGKKKKA) the composition is skewed to basic residues. Residue aspartate 396 is the site of GPI-anchor amidated aspartate attachment. The propeptide at 397-424 (AGAVRIIGGAKAGLVVSLLCLFASSWLL) is removed in mature form.

This sequence belongs to the fasciclin-like AGP family. As to expression, preferentially expressed in flowers.

It is found in the secreted. It localises to the extracellular space. Its subcellular location is the apoplast. The protein localises to the cell membrane. In terms of biological role, may be a cell surface adhesion protein. The protein is Fasciclin-like arabinogalactan protein 1 (FLA1) of Arabidopsis thaliana (Mouse-ear cress).